A 1010-amino-acid chain; its full sequence is 2-oxoglutarate dehydrogenase-like, mitochondrial (1010 aa).

The transit peptide at 1–107 (MSQLRLLLFR…RASVSSCTKT (107 aa)) directs the protein to the mitochondrion. A disordered region spans residues 28-47 (GGRRRSSGPPTTIPRSRGGV). 3 residues coordinate Ca(2+): His130, Asp143, and Asp145. Residues Arg299, Asp398, Asn431, Ile433, and Gln663 each contribute to the thiamine diphosphate site. Mg(2+)-binding residues include Asp398, Asn431, and Ile433.

It belongs to the alpha-ketoglutarate dehydrogenase family. As to quaternary structure, the OGDHC complex comprises multiple copies of three catalytic enzyme components, the 2-oxoglutarate dehydrogenase (OGDH/E1), the dihydrolipoamide dehydrogenase (DLST/E2) and the dihydrolipoamide dehydrogenase (DLD/E3). OGDHL/E1-like isoenzyme may replace OGDH in the OGDHC complex in the brain. The presence of either ODGH/E1 or ODGHL/E1-like isoenzyme in the complex may depend on its tissular distribution. Requires thiamine diphosphate as cofactor. The cofactor is Mg(2+). The OGDHL-containing OGDHC complex is present in the brain, but not in the heart.

The protein resides in the mitochondrion matrix. The catalysed reaction is N(6)-[(R)-lipoyl]-L-lysyl-[protein] + 2-oxoglutarate + H(+) = N(6)-[(R)-S(8)-succinyldihydrolipoyl]-L-lysyl-[protein] + CO2. Functionally, 2-oxoglutarate dehydrogenase (E1-like) component of the 2-oxoglutarate dehydrogenase multienzyme complex (OGDHC) which mediates the decarboxylation of alpha-ketoglutarate in the tricarboxylic acid cycle. The OGDHC complex catalyzes the overall conversion of 2-oxoglutarate to succinyl-CoA and CO(2) while reducing NAD(+) to NADH. The OGDHC complex is mainly active in the mitochondrion. Involved in the inhibition of cell proliferation and in apoptosis. The polypeptide is 2-oxoglutarate dehydrogenase-like, mitochondrial (Rattus norvegicus (Rat)).